We begin with the raw amino-acid sequence, 291 residues long: UTP--glucose-1-phosphate uridylyltransferase (291 aa).

Belongs to the UDPGP type 2 family.

It carries out the reaction alpha-D-glucose 1-phosphate + UTP + H(+) = UDP-alpha-D-glucose + diphosphate. In terms of biological role, may play a role in stationary phase survival. The sequence is that of UTP--glucose-1-phosphate uridylyltransferase (galU) from Mycoplasma pneumoniae (strain ATCC 29342 / M129 / Subtype 1) (Mycoplasmoides pneumoniae).